Consider the following 30-residue polypeptide: Fimbrial assembly protein, serogroup B1 (30 aa).

This is Fimbrial assembly protein, serogroup B1 (fimB) from Dichelobacter nodosus (Bacteroides nodosus).